Consider the following 678-residue polypeptide: Translation factor GUF1 homolog, chloroplastic (678 aa).

Residues 1–43 (MASILLSLNTHTLLPLHTRTRTTKTTLKILRFSHKLPPSSPFY) constitute a chloroplast transit peptide. In terms of domain architecture, tr-type G spans 81 to 262 (KNIRNFCIIA…AIVERVPPPR (182 aa)). GTP contacts are provided by residues 90 to 97 (AHIDHGKS), 155 to 159 (DTPGH), and 209 to 212 (NKID).

Belongs to the TRAFAC class translation factor GTPase superfamily. Classic translation factor GTPase family. LepA subfamily.

It is found in the plastid. It localises to the chloroplast. The enzyme catalyses GTP + H2O = GDP + phosphate + H(+). Functionally, promotes chloroplast protein synthesis. May act as a fidelity factor of the translation reaction, by catalyzing a one-codon backward translocation of tRNAs on improperly translocated ribosomes. The polypeptide is Translation factor GUF1 homolog, chloroplastic (Populus trichocarpa (Western balsam poplar)).